Consider the following 222-residue polypeptide: Type II restriction enzyme AbrI (222 aa).

2 disordered regions span residues 21-45 (GNRE…RRDR) and 161-222 (NQRR…SPRI). The segment covering 22–42 (NREKARQKQQESGKPDQGERR) has biased composition (basic and acidic residues). Low complexity predominate over residues 188-202 (SSASGSSRSSFTPRP).

It belongs to the XhoI type II restriction endonuclease family.

The catalysed reaction is Endonucleolytic cleavage of DNA to give specific double-stranded fragments with terminal 5'-phosphates.. Its function is as follows. A P subtype restriction enzyme that recognizes the double-stranded sequence 5'-CTCGAG-3' and cleaves after C-1. The protein is Type II restriction enzyme AbrI (abrIR) of Azospirillum brasilense.